Consider the following 199-residue polypeptide: RNA-free ribonuclease P (199 aa).

It belongs to the HARP family.

It carries out the reaction Endonucleolytic cleavage of RNA, removing 5'-extranucleotides from tRNA precursor.. Its function is as follows. RNA-free RNase P that catalyzes the removal of the 5'-leader sequence from pre-tRNA to produce the mature 5'-terminus. The polypeptide is RNA-free ribonuclease P (Pyrococcus furiosus (strain ATCC 43587 / DSM 3638 / JCM 8422 / Vc1)).